Consider the following 275-residue polypeptide: Probable endonuclease 4 (275 aa).

Zn(2+) contacts are provided by His66, His106, Glu140, Asp172, His175, His209, Asp222, His224, and Glu254.

This sequence belongs to the AP endonuclease 2 family. Zn(2+) serves as cofactor.

The enzyme catalyses Endonucleolytic cleavage to 5'-phosphooligonucleotide end-products.. Endonuclease IV plays a role in DNA repair. It cleaves phosphodiester bonds at apurinic or apyrimidinic (AP) sites, generating a 3'-hydroxyl group and a 5'-terminal sugar phosphate. The sequence is that of Probable endonuclease 4 from Halobacterium salinarum (strain ATCC 29341 / DSM 671 / R1).